Consider the following 302-residue polypeptide: UDP-N-acetylenolpyruvoylglucosamine reductase (302 aa).

Residues Ile30–Gly196 enclose the FAD-binding PCMH-type domain. The active site involves Arg174. The active-site Proton donor is the Ser225. Glu295 is an active-site residue.

The protein belongs to the MurB family. Requires FAD as cofactor.

The protein resides in the cytoplasm. It carries out the reaction UDP-N-acetyl-alpha-D-muramate + NADP(+) = UDP-N-acetyl-3-O-(1-carboxyvinyl)-alpha-D-glucosamine + NADPH + H(+). The protein operates within cell wall biogenesis; peptidoglycan biosynthesis. Its function is as follows. Cell wall formation. This is UDP-N-acetylenolpyruvoylglucosamine reductase from Anoxybacillus flavithermus (strain DSM 21510 / WK1).